Here is a 1183-residue protein sequence, read N- to C-terminus: RecQ-like DNA helicase BLM (1183 aa).

The disordered stretch occupies residues 1–109 (MEEARAATNG…AAEQDSSAEH (109 aa)). Positions 14-27 (ESQKLSNGEKSSQL) are enriched in polar residues. The span at 38 to 48 (ADIELEEDDYL) shows a compositional bias: acidic residues. Residues 110-162 (ADKGLHLEQQLYSVMEDICKLVDAIPLHELTSISCAKELLQQRELRRKLLADS) are necessary for dimerization and homooligomerization. Disordered regions lie at residues 164–215 (ALNT…LPSV), 260–323 (PKVN…GCWD), and 381–408 (GSAPGPHPTAPKSGCGISAKSSSEPLVH). 2 stretches are compositionally biased toward polar residues: residues 206 to 215 (TPKSTNLPSV) and 265 to 280 (KGSTSLSRPSEASFNG). ATP contacts are provided by residues 439–443 (FRTNQ) and 463–467 (GGGKS). Positions 447–622 (INAALLGEDC…QNQLEMLKPQ (176 aa)) constitute a Helicase ATP-binding domain. Positions 566 to 569 (DEAH) match the DEAH box motif. 3' overhang DNA-binding regions lie at residues 641-644 (KPKK) and 668-670 (SRH). Residues 648 to 795 (DCLEWIKKYH…TRQTHFNNLY (148 aa)) form the Helicase C-terminal domain. Residue arginine 753 participates in ATP binding. The 3' overhang DNA-binding stretch occupies residues 771–774 (RLRR). Residues cysteine 807, cysteine 826, cysteine 834, and cysteine 837 each contribute to the Zn(2+) site. The DNA Holliday junction binding stretch occupies residues 865 to 910 (QVGGINGNRNTGSGRYTLNMMVDIFLGAKSAKIQSGIFGKGAAYSR). 3 3' overhang DNA-binding regions span residues 881–883 (TLN), 892–896 (AKSAK), and 931–937 (YITANDQ). The HRDC domain maps to 983 to 1063 (EEMVKKCLGE…DKYSEWTTPE (81 aa)). The segment at 998-1015 (KTLGKIFDVHYFNIFSTS) is necessary for ssDNA and DNA Holliday junction binding. The segment at 1068-1183 (QSVDTAPGSA…HFLQPSYAVL (116 aa)) is disordered. The span at 1091–1101 (VTSSYFGGNAN) shows a compositional bias: polar residues. The Nuclear localization signal signature appears at 1104 to 1120 (RKRKRLPNSGESKRKKT). Basic residues predominate over residues 1133–1142 (ARYRRARRAP). Residues 1143–1158 (GSRAAAPAQSSALRGA) are compositionally biased toward low complexity.

It belongs to the helicase family. RecQ subfamily. In terms of assembly, monomer. Homodimer (via N-terminus). Homotetramer (via N-terminus); dimer of dimers. Homohexamer (via N-terminus). Self-association negatively regulates DNA unwinding amplitude and rate. Oligomer complexes dissociate into monomer in presence of ATP. Zn(2+) serves as cofactor.

It localises to the nucleus. It catalyses the reaction Couples ATP hydrolysis with the unwinding of duplex DNA by translocating in the 3'-5' direction.. The catalysed reaction is ATP + H2O = ADP + phosphate + H(+). ATP-dependent DNA helicase that unwinds single- and double-stranded DNA in a 3'-5' direction. Participates in DNA replication and repair. Involved in 5'-end resection of DNA during double-strand break (DSB) repair. Negatively regulates sister chromatid exchange (SCE). Stimulates DNA 4-way junction branch migration and DNA Holliday junction dissolution. Binds DNA. Binds single-stranded DNA (ssDNA), forked duplex DNA and DNA Holliday junction. In Gallus gallus (Chicken), this protein is RecQ-like DNA helicase BLM (BLM).